Consider the following 283-residue polypeptide: Phosphatidylglycerol--prolipoprotein diacylglyceryl transferase (283 aa).

The next 3 membrane-spanning stretches (helical) occupy residues 17–37 (LAVRWYALSYILGFILFTFLG), 56–76 (FLTWGILGVILGGRLGYVLFY), and 88–108 (IFKVWEGGMSFHGGFLGVVIA). Position 139 (arginine 139) interacts with a 1,2-diacyl-sn-glycero-3-phospho-(1'-sn-glycerol). 2 consecutive transmembrane segments (helical) span residues 222 to 242 (GQVASLFLGGYGIFRFIAEFA) and 255 to 275 (GLSMGQWLSVPMIVLGIVGFV).

The protein belongs to the Lgt family.

It localises to the cell inner membrane. It catalyses the reaction L-cysteinyl-[prolipoprotein] + a 1,2-diacyl-sn-glycero-3-phospho-(1'-sn-glycerol) = an S-1,2-diacyl-sn-glyceryl-L-cysteinyl-[prolipoprotein] + sn-glycerol 1-phosphate + H(+). It functions in the pathway protein modification; lipoprotein biosynthesis (diacylglyceryl transfer). Its function is as follows. Catalyzes the transfer of the diacylglyceryl group from phosphatidylglycerol to the sulfhydryl group of the N-terminal cysteine of a prolipoprotein, the first step in the formation of mature lipoproteins. This chain is Phosphatidylglycerol--prolipoprotein diacylglyceryl transferase, found in Neisseria meningitidis serogroup B (strain ATCC BAA-335 / MC58).